A 90-amino-acid chain; its full sequence is Accessory gland-specific peptide 26Ab (90 aa).

The N-terminal stretch at 1–21 (MNYFAVLCIFSCICLWQFSDA) is a signal peptide.

Main cells of the accessory glands of males.

The protein resides in the secreted. It localises to the extracellular space. This protein is transferred from male to female during mating and may affect egglaying and behavior after mating. This chain is Accessory gland-specific peptide 26Ab (Acp26Ab), found in Drosophila sechellia (Fruit fly).